The primary structure comprises 471 residues: Argininosuccinate lyase (471 aa).

Belongs to the lyase 1 family. Argininosuccinate lyase subfamily.

Its subcellular location is the cytoplasm. It carries out the reaction 2-(N(omega)-L-arginino)succinate = fumarate + L-arginine. It participates in amino-acid biosynthesis; L-arginine biosynthesis; L-arginine from L-ornithine and carbamoyl phosphate: step 3/3. This chain is Argininosuccinate lyase, found in Deinococcus radiodurans (strain ATCC 13939 / DSM 20539 / JCM 16871 / CCUG 27074 / LMG 4051 / NBRC 15346 / NCIMB 9279 / VKM B-1422 / R1).